The following is a 536-amino-acid chain: Trigger factor (536 aa).

Residues 164–249 (GDQVIIDFAG…VKEVKVPAAT (86 aa)) form the PPIase FKBP-type domain. The segment at 439–536 (IEADDDSGHV…APAKKAAAKK (98 aa)) is disordered. Over residues 472-502 (TKKEAVKDEAKAEEAPAKKAPAKKAEPKAEA) the composition is skewed to basic and acidic residues. The segment covering 503–515 (KPAAAKKAAPAKA) has biased composition (low complexity). Basic and acidic residues predominate over residues 516–525 (AAEEKAEPAK). The span at 527 to 536 (APAKKAAAKK) shows a compositional bias: basic residues.

The protein belongs to the FKBP-type PPIase family. Tig subfamily.

Its subcellular location is the cytoplasm. The enzyme catalyses [protein]-peptidylproline (omega=180) = [protein]-peptidylproline (omega=0). Functionally, involved in protein export. Acts as a chaperone by maintaining the newly synthesized protein in an open conformation. Functions as a peptidyl-prolyl cis-trans isomerase. This is Trigger factor from Sphingopyxis alaskensis (strain DSM 13593 / LMG 18877 / RB2256) (Sphingomonas alaskensis).